The primary structure comprises 312 residues: Putative HTH-type transcriptional regulatory protein Ta1363 (312 aa).

Positions 133 to 186 (LREMRMKMSLSIGYLSHYLGVSRRSVSLYENGSSATIDVFLKLQEIIKSDLVDH) constitute an HTH cro/C1-type domain. A DNA-binding region (H-T-H motif) is located at residues 144-163 (IGYLSHYLGVSRRSVSLYEN).

This chain is Putative HTH-type transcriptional regulatory protein Ta1363, found in Thermoplasma acidophilum (strain ATCC 25905 / DSM 1728 / JCM 9062 / NBRC 15155 / AMRC-C165).